Here is a 69-residue protein sequence, read N- to C-terminus: DNA-directed RNA polymerase subunit omega (69 aa).

Belongs to the RNA polymerase subunit omega family. As to quaternary structure, the RNAP catalytic core consists of 2 alpha, 1 beta, 1 beta' and 1 omega subunit. When a sigma factor is associated with the core the holoenzyme is formed, which can initiate transcription.

The enzyme catalyses RNA(n) + a ribonucleoside 5'-triphosphate = RNA(n+1) + diphosphate. Promotes RNA polymerase assembly. Latches the N- and C-terminal regions of the beta' subunit thereby facilitating its interaction with the beta and alpha subunits. The sequence is that of DNA-directed RNA polymerase subunit omega from Geotalea uraniireducens (strain Rf4) (Geobacter uraniireducens).